A 150-amino-acid polypeptide reads, in one-letter code: MNIEVEMKVLDERMADVVPVYATEGSAGLDLRACLDEEVVLQPGETFLVPTGLAIYLANPAYAAVLLPRSGLGHKHGIVLGNLVGLIDSDYQGELKVSLWNRSSEPFTVKPFERIAQMVVVPIVQAGFKRVEEFVGSSRGEGGFGSTGSH.

Substrate contacts are provided by residues 69–71 (RSG), asparagine 82, 86–88 (LID), and lysine 96.

Belongs to the dUTPase family. The cofactor is Mg(2+).

It carries out the reaction dUTP + H2O = dUMP + diphosphate + H(+). It functions in the pathway pyrimidine metabolism; dUMP biosynthesis; dUMP from dCTP (dUTP route): step 2/2. Its function is as follows. This enzyme is involved in nucleotide metabolism: it produces dUMP, the immediate precursor of thymidine nucleotides and it decreases the intracellular concentration of dUTP so that uracil cannot be incorporated into DNA. In Neisseria meningitidis serogroup B (strain ATCC BAA-335 / MC58), this protein is Deoxyuridine 5'-triphosphate nucleotidohydrolase.